The following is a 600-amino-acid chain: DDB1- and CUL4-associated factor 8-like protein 1 (600 aa).

Residues 1-122 are disordered; the sequence is MSHQEGSTGG…EEEQPRMCPR (122 aa). Acidic residues-rich tracts occupy residues 74–83 and 96–115; these read SSSEDVELES and EETEREEEEEEMEEEGEEEE. 7 WD repeats span residues 194-233, 237-278, 284-324, 332-372, 388-427, 435-475, and 479-518; these read SHAGSVSTIHFNQRGTRLASSGDDLRVIVWDWVRQKPVLN, GHDI…YCEN, KHRG…PASK, DKKV…KKEN, DFPTNITCVVYSHDGTELLASYNDEDIYLFNSSLSDGAQY, RNND…IIQF, and DRGDIVNCLEPHPYLPVLATSGLDQHVRIWTPTAKTATEL. Positions 562–600 are disordered; sequence PGWRDHGAEFPDEEELDESSSTSDTSEEEGQDRVQCIPS.

This sequence belongs to the WD repeat DCAF8 family.

The protein is DDB1- and CUL4-associated factor 8-like protein 1 (DCAF8L1) of Homo sapiens (Human).